The following is an 801-amino-acid chain: Mediator of RNA polymerase II transcription subunit 25 (801 aa).

3 stretches are compositionally biased toward low complexity: residues Pro647–Ala676, Pro687–Leu710, and Pro722–Pro735. The segment at Pro647–Pro735 is disordered. Residues Leu689–Leu693 carry the LXXLL motif motif.

It belongs to the Mediator complex subunit 25 family. Component of the Mediator complex.

Its subcellular location is the nucleus. Functionally, component of the Mediator complex, a coactivator involved in the regulated transcription of nearly all RNA polymerase II-dependent genes. Mediator functions as a bridge to convey information from gene-specific regulatory proteins to the basal RNA polymerase II transcription machinery. Mediator is recruited to promoters by direct interactions with regulatory proteins and serves as a scaffold for the assembly of a functional preinitiation complex with RNA polymerase II and the general transcription factors. This chain is Mediator of RNA polymerase II transcription subunit 25 (med25), found in Xenopus laevis (African clawed frog).